A 97-amino-acid polypeptide reads, in one-letter code: Kininogen-1 (97 aa).

A signal peptide spans 1–23 (MRLWFCLSFLIILCVEHFPGTLA).

Belongs to the bradykinin-related peptide family. Expressed by the skin glands.

Its subcellular location is the secreted. [Ala3,Thr6]bradykinin: produces in vitro relaxation of rat arterial smooth muscle and constriction of intestinal smooth muscle. Possesses insulin-releasing activity. May target bradykinin receptors (BDKRB). The sequence is that of Kininogen-1 from Bombina variegata (Yellow-bellied toad).